The chain runs to 129 residues: PQTDKQVCIPPELPELLKTQPPDLIQWAAEYFGAMSRGEIPPVRLIIHADELAQMWKTLKIVCEVLSCDHDGGPPRIPFSTFQFLYTYIAEVDGEISSSHVSRMLNYIEQEVIGPDGLIKVNDFTQNPR.

The RIIa domain occupies Pro11–Ala34.

It belongs to the ropporin family. As to quaternary structure, homodimer. Interacts with AKAP3. May interact with SPA17. Interacts with RHPN1. Interacts with FSCB; the interaction increases upon spermatozoa capacitation conditions. Interacts with CFAP61. Sumoylated, sumoylation decreases upon spermatozoa capacitation conditions.

The protein resides in the cell projection. The protein localises to the cilium. Its subcellular location is the flagellum. Functionally, important for male fertility. With ROPN1L, involved in fibrous sheath integrity and sperm motility, plays a role in PKA-dependent signaling processes required for spermatozoa capacitation. In Mesocricetus auratus (Golden hamster), this protein is Ropporin-1.